A 25-amino-acid chain; its full sequence is Small ribosomal subunit protein eS32 (25 aa).

The segment at 1 to 25 (MRDKWRKKRVRRLKRKRRKVRARSK) is disordered.

It belongs to the eukaryotic ribosomal protein eS32 family. In terms of assembly, component of the small ribosomal subunit. Mature ribosomes consist of a small (40S) and a large (60S) subunit. The 40S subunit contains about 32 different proteins and 1 molecule of RNA (18S). The 60S subunit contains 45 different proteins and 3 molecules of RNA (25S, 5.8S and 5S).

It is found in the cytoplasm. In terms of biological role, component of the ribosome, a large ribonucleoprotein complex responsible for the synthesis of proteins in the cell. The small ribosomal subunit (SSU) binds messenger RNAs (mRNAs) and translates the encoded message by selecting cognate aminoacyl-transfer RNA (tRNA) molecules. The large subunit (LSU) contains the ribosomal catalytic site termed the peptidyl transferase center (PTC), which catalyzes the formation of peptide bonds, thereby polymerizing the amino acids delivered by tRNAs into a polypeptide chain. The nascent polypeptides leave the ribosome through a tunnel in the LSU and interact with protein factors that function in enzymatic processing, targeting, and the membrane insertion of nascent chains at the exit of the ribosomal tunnel. This Candida albicans (strain SC5314 / ATCC MYA-2876) (Yeast) protein is Small ribosomal subunit protein eS32.